The following is a 209-amino-acid chain: MVNFVSVGLFRCLPVPCPEDLLVEELVDGLLSLEEELKDKEEEETVLDGLLSLEEESRGRLRRGPPGGKAPPRGETHRDRQRRAEEKRKRKKEREKEEEKQIAEYLKRKEEEKARRRKRAEEKAADFARRKQEEQERRERKWRQGAEKAKQHSARKEKMQELGVDGYTRQLEGEVESLEAERRRLLQEKEDLMGEVNYWQGRLEAMWLQ.

Positions 41-165 are disordered; sequence EEEETVLDGL…KEKMQELGVD (125 aa). Composition is skewed to basic and acidic residues over residues 72–87 and 94–160; these read PRGE…AEEK and REKE…EKMQ. Short sequence motifs (nuclear localization signal) lie at residues 87-92, 116-120, and 137-141; these read KRKRKK, RRKRA, and RRERK.

It belongs to the HTLV-1 HBZ protein family. In terms of assembly, interacts with host ATF4; this interaction inhibits viral RNA transcriptional activation by preventing ATF4 binding to Tax-responsive elements. Interacts with host CREB1; this interaction inhibits host CREB1 transcriptional activity. Interacts with host JUN, JUNB and JUND. Interacts with host EP300 and CREBBP; these interactions inhibit the association of the coactivators with the viral promoter. Interacts with host UBR5; this interaction regulates HBZ protein stability. Interacts with XRCC5 and XRCC6. Interacts with IRF7 and IKBKE; this interaction modulates host interferon signaling. Ubiquitinated by host E3 ligase UBR5 leading to HBZ degradation.

It is found in the host nucleus. Enhances viral infectivity and persistence, and facilitates proliferation of HTLV-1-infected lymphocytes. Mechanistically, inhibits Tax-mediated viral replication and NF-kappa-B activation. Plays a role in allowing infected T-cells to escape the cytotoxic T-lymphocyte response by maintaining low levels of viral protein production. Also inhibits host EP300 histone acetyltransferase (HAT) activity, reducing levels of acetylated histone H3 at 'Lys-18' (H3K18ac) in infected cells. Contributes to the accumulation of chromosomal abnormalities by inhibiting double-stranded DNA breaks (DSB) repair through the NHEJ pathway. Participates in the modulation of host immune response at multiple levels contributing to abnormal interferon signaling and viral pathogenesis. This Human T-cell leukemia virus 1 (isolate Caribbea HS-35 subtype A) (HTLV-1) protein is HTLV-1 basic zipper factor (HBZ).